A 425-amino-acid polypeptide reads, in one-letter code: Glucose-6-phosphate 1-dehydrogenase (425 aa).

The NADP(+) site is built by Arg-44 and Lys-135. His-165, Lys-169, Glu-201, and Asp-220 together coordinate substrate. Residue His-225 is the Proton acceptor of the active site. Lys-311 lines the substrate pocket.

The protein belongs to the glucose-6-phosphate dehydrogenase family.

The catalysed reaction is D-glucose 6-phosphate + NADP(+) = 6-phospho-D-glucono-1,5-lactone + NADPH + H(+). It participates in carbohydrate degradation; pentose phosphate pathway; D-ribulose 5-phosphate from D-glucose 6-phosphate (oxidative stage): step 1/3. Functionally, catalyzes the oxidation of glucose 6-phosphate to 6-phosphogluconolactone. The polypeptide is Glucose-6-phosphate 1-dehydrogenase (Helicobacter pylori (strain J99 / ATCC 700824) (Campylobacter pylori J99)).